The chain runs to 1048 residues: Bifunctional heparan sulfate N-deacetylase/N-sulfotransferase (1048 aa).

Topologically, residues 1-172 (MTISGGNQHN…RRCFGINVRR (172 aa)) are cytoplasmic. Residues 173–192 (CVLALLAITMVSIFYYTHYV) form a helical; Signal-anchor for type II membrane protein membrane-spanning segment. Positions 192 to 752 (VDTGVFNGLI…VRHKKIWSKT (561 aa)) are heparan sulfate N-deacetylase. Topologically, residues 193–1048 (DTGVFNGLIQ…WLKDDLSTGT (856 aa)) are lumenal. N-linked (GlcNAc...) asparagine glycosylation is found at Asn-388 and Asn-555. Positions 753-1048 (KNCDSLPKFL…WLKDDLSTGT (296 aa)) are heparan sulfate N-sulfotransferase. The active-site For sulfotransferase activity is Lys-768. 768 to 772 (KTGTT) is a 3'-phosphoadenylyl sulfate binding site. Residue Asn-823 is glycosylated (N-linked (GlcNAc...) asparagine). Ser-877 contacts 3'-phosphoadenylyl sulfate. A glycan (N-linked (GlcNAc...) asparagine) is linked at Asn-892. Cys-983 and Cys-993 are joined by a disulfide. Residue 998–1002 (KGRQY) participates in 3'-phosphoadenylyl sulfate binding.

This sequence belongs to the sulfotransferase 1 family. NDST subfamily. In terms of assembly, monomer.

The protein resides in the golgi apparatus membrane. It catalyses the reaction alpha-D-glucosaminyl-[heparan sulfate](n) + 3'-phosphoadenylyl sulfate = N-sulfo-alpha-D-glucosaminyl-[heparan sulfate](n) + adenosine 3',5'-bisphosphate + 2 H(+). The protein operates within glycan metabolism; heparan sulfate biosynthesis. It functions in the pathway glycan metabolism; heparin biosynthesis. Essential bifunctional enzyme that catalyzes both the N-deacetylation and the N-sulfation of glucosamine (GlcNAc) of the glycosaminoglycan in heparan sulfate. Modifies the GlcNAc-GlcA disaccharide repeating sugar backbone to make N-sulfated heparosan, a prerequisite substrate for later modifications in heparin biosynthesis. Plays a role in diffusion of morphogen wingless (wg) via its role in heparan sulfate proteoglycans (HSPGs) biosynthesis, HSPGs being required for movement of wg morphogens. Required for wg signaling during both embryonic and imaginal disk development. Also required for FGF receptor signaling. The protein is Bifunctional heparan sulfate N-deacetylase/N-sulfotransferase (sfl) of Drosophila melanogaster (Fruit fly).